The sequence spans 386 residues: Succinyl-diaminopimelate desuccinylase (386 aa).

His75 contributes to the Zn(2+) binding site. Residue Asp77 is part of the active site. Zn(2+) is bound at residue Asp108. Catalysis depends on Glu138, which acts as the Proton acceptor. Residues Glu139, Glu167, and His356 each contribute to the Zn(2+) site.

This sequence belongs to the peptidase M20A family. DapE subfamily. Homodimer. Zn(2+) serves as cofactor. Requires Co(2+) as cofactor.

The catalysed reaction is N-succinyl-(2S,6S)-2,6-diaminopimelate + H2O = (2S,6S)-2,6-diaminopimelate + succinate. It functions in the pathway amino-acid biosynthesis; L-lysine biosynthesis via DAP pathway; LL-2,6-diaminopimelate from (S)-tetrahydrodipicolinate (succinylase route): step 3/3. Its function is as follows. Catalyzes the hydrolysis of N-succinyl-L,L-diaminopimelic acid (SDAP), forming succinate and LL-2,6-diaminopimelate (DAP), an intermediate involved in the bacterial biosynthesis of lysine and meso-diaminopimelic acid, an essential component of bacterial cell walls. This Caulobacter vibrioides (strain ATCC 19089 / CIP 103742 / CB 15) (Caulobacter crescentus) protein is Succinyl-diaminopimelate desuccinylase.